Here is a 350-residue protein sequence, read N- to C-terminus: Isopentenyl-diphosphate delta-isomerase (350 aa).

15–16 (RK) provides a ligand contact to substrate. Residues Ser73, 74-76 (SMT), Ser104, and Asn132 contribute to the FMN site. A substrate-binding site is contributed by 104–106 (SQR). Substrate is bound at residue Gln167. Glu168 lines the Mg(2+) pocket. FMN contacts are provided by residues Lys199, Thr229, 279–281 (GLR), and 300–301 (AM).

It belongs to the IPP isomerase type 2 family. Homooctamer. Dimer of tetramers. The cofactor is FMN. NADPH is required as a cofactor. Requires Mg(2+) as cofactor.

It localises to the cytoplasm. It catalyses the reaction isopentenyl diphosphate = dimethylallyl diphosphate. Its function is as follows. Involved in the biosynthesis of isoprenoids. Catalyzes the 1,3-allylic rearrangement of the homoallylic substrate isopentenyl (IPP) to its allylic isomer, dimethylallyl diphosphate (DMAPP). This is Isopentenyl-diphosphate delta-isomerase from Nostoc sp. (strain PCC 7120 / SAG 25.82 / UTEX 2576).